The sequence spans 250 residues: Indole-3-glycerol phosphate synthase (250 aa).

It belongs to the TrpC family.

The enzyme catalyses 1-(2-carboxyphenylamino)-1-deoxy-D-ribulose 5-phosphate + H(+) = (1S,2R)-1-C-(indol-3-yl)glycerol 3-phosphate + CO2 + H2O. The protein operates within amino-acid biosynthesis; L-tryptophan biosynthesis; L-tryptophan from chorismate: step 4/5. This is Indole-3-glycerol phosphate synthase from Metallosphaera sedula (strain ATCC 51363 / DSM 5348 / JCM 9185 / NBRC 15509 / TH2).